Consider the following 341-residue polypeptide: Protein-glutamate methylesterase/protein-glutamine glutaminase 2 (341 aa).

The region spanning 11–126 (RVLVADDSEL…DLGEYGRLIR (116 aa)) is the Response regulatory domain. Position 62 is a 4-aspartylphosphate (Asp-62). The CheB-type methylesterase domain maps to 152–341 (PARAARVEVV…IPRALRELTR (190 aa)). Catalysis depends on residues Ser-166, His-193, and Asp-285.

This sequence belongs to the CheB family. Phosphorylated by CheA. Phosphorylation of the N-terminal regulatory domain activates the methylesterase activity.

The protein localises to the cytoplasm. The enzyme catalyses [protein]-L-glutamate 5-O-methyl ester + H2O = L-glutamyl-[protein] + methanol + H(+). It catalyses the reaction L-glutaminyl-[protein] + H2O = L-glutamyl-[protein] + NH4(+). Functionally, involved in chemotaxis. Part of a chemotaxis signal transduction system that modulates chemotaxis in response to various stimuli. Catalyzes the demethylation of specific methylglutamate residues introduced into the chemoreceptors (methyl-accepting chemotaxis proteins or MCP) by CheR. Also mediates the irreversible deamidation of specific glutamine residues to glutamic acid. This Anaeromyxobacter dehalogenans (strain 2CP-C) protein is Protein-glutamate methylesterase/protein-glutamine glutaminase 2.